The following is a 302-amino-acid chain: UDP-3-O-acyl-N-acetylglucosamine deacetylase (302 aa).

Zn(2+) is bound by residues histidine 78, histidine 235, and aspartate 239. Catalysis depends on histidine 262, which acts as the Proton donor.

Belongs to the LpxC family. Zn(2+) is required as a cofactor.

The catalysed reaction is a UDP-3-O-[(3R)-3-hydroxyacyl]-N-acetyl-alpha-D-glucosamine + H2O = a UDP-3-O-[(3R)-3-hydroxyacyl]-alpha-D-glucosamine + acetate. It functions in the pathway glycolipid biosynthesis; lipid IV(A) biosynthesis; lipid IV(A) from (3R)-3-hydroxytetradecanoyl-[acyl-carrier-protein] and UDP-N-acetyl-alpha-D-glucosamine: step 2/6. In terms of biological role, catalyzes the hydrolysis of UDP-3-O-myristoyl-N-acetylglucosamine to form UDP-3-O-myristoylglucosamine and acetate, the committed step in lipid A biosynthesis. In Bdellovibrio bacteriovorus (strain ATCC 15356 / DSM 50701 / NCIMB 9529 / HD100), this protein is UDP-3-O-acyl-N-acetylglucosamine deacetylase.